The following is a 38-amino-acid chain: Photosystem II reaction center protein L (38 aa).

The chain crosses the membrane as a helical span at residues 17–37 (SLFWGLLLIFVLAVLFSSYFF).

This sequence belongs to the PsbL family. In terms of assembly, PSII is composed of 1 copy each of membrane proteins PsbA, PsbB, PsbC, PsbD, PsbE, PsbF, PsbH, PsbI, PsbJ, PsbK, PsbL, PsbM, PsbT, PsbX, PsbY, PsbZ, Psb30/Ycf12, at least 3 peripheral proteins of the oxygen-evolving complex and a large number of cofactors. It forms dimeric complexes.

The protein localises to the plastid. It is found in the chloroplast thylakoid membrane. One of the components of the core complex of photosystem II (PSII). PSII is a light-driven water:plastoquinone oxidoreductase that uses light energy to abstract electrons from H(2)O, generating O(2) and a proton gradient subsequently used for ATP formation. It consists of a core antenna complex that captures photons, and an electron transfer chain that converts photonic excitation into a charge separation. This subunit is found at the monomer-monomer interface and is required for correct PSII assembly and/or dimerization. The protein is Photosystem II reaction center protein L of Gracilaria tenuistipitata var. liui (Red alga).